The following is a 297-amino-acid chain: Undecaprenyl-diphosphatase 3 (297 aa).

The next 6 membrane-spanning stretches (helical) occupy residues 39–59, 89–109, 118–138, 203–223, 237–257, and 268–288; these read PGAAFTAVTQIGTETAVLIYF, WLVLLGTIPIGLLGVTLQDAI, LIATTLIVLGLILGGADWYAS, FLLAMPAVLASGVFELKSIGG, PTIVATVVAFATGYAAIAWFL, and FVLYRVALGLLLLALLAGGAI.

Belongs to the UppP family.

It is found in the cell membrane. It carries out the reaction di-trans,octa-cis-undecaprenyl diphosphate + H2O = di-trans,octa-cis-undecaprenyl phosphate + phosphate + H(+). In terms of biological role, catalyzes the dephosphorylation of undecaprenyl diphosphate (UPP). Confers resistance to bacitracin. The polypeptide is Undecaprenyl-diphosphatase 3 (Frankia alni (strain DSM 45986 / CECT 9034 / ACN14a)).